The chain runs to 88 residues: Apolipoprotein C-I (88 aa).

The first 26 residues, 1 to 26 (MRLILSLPVLVVVLSMVLEGPAPAQA), serve as a signal peptide directing secretion.

It belongs to the apolipoprotein C1 family.

The protein resides in the secreted. In terms of biological role, inhibitor of lipoprotein binding to the low density lipoprotein (LDL) receptor, LDL receptor-related protein, and very low density lipoprotein (VLDL) receptor. Associates with high density lipoproteins (HDL) and the triacylglycerol-rich lipoproteins in the plasma and makes up about 10% of the protein of the VLDL and 2% of that of HDL. Appears to interfere directly with fatty acid uptake and is also the major plasma inhibitor of cholesteryl ester transfer protein (CETP). Binds free fatty acids and reduces their intracellular esterification. Modulates the interaction of APOE with beta-migrating VLDL and inhibits binding of beta-VLDL to the LDL receptor-related protein. This chain is Apolipoprotein C-I (APOC1), found in Lycaon pictus (African wild dog).